The sequence spans 455 residues: Probable glycine dehydrogenase (decarboxylating) subunit 1 (455 aa).

It belongs to the GcvP family. N-terminal subunit subfamily. As to quaternary structure, the glycine cleavage system is composed of four proteins: P, T, L and H. In this organism, the P 'protein' is a heterodimer of two subunits.

It catalyses the reaction N(6)-[(R)-lipoyl]-L-lysyl-[glycine-cleavage complex H protein] + glycine + H(+) = N(6)-[(R)-S(8)-aminomethyldihydrolipoyl]-L-lysyl-[glycine-cleavage complex H protein] + CO2. The glycine cleavage system catalyzes the degradation of glycine. The P protein binds the alpha-amino group of glycine through its pyridoxal phosphate cofactor; CO(2) is released and the remaining methylamine moiety is then transferred to the lipoamide cofactor of the H protein. This is Probable glycine dehydrogenase (decarboxylating) subunit 1 from Saccharolobus solfataricus (strain ATCC 35092 / DSM 1617 / JCM 11322 / P2) (Sulfolobus solfataricus).